Reading from the N-terminus, the 323-residue chain is Probable cell division protein WhiA (323 aa).

The H-T-H motif DNA-binding region spans 275-309; that stretch reads TLKELGEMLTTGQVSKSGINHRLRKLDQIAERLRS.

The protein belongs to the WhiA family.

Functionally, involved in cell division and chromosome segregation. The polypeptide is Probable cell division protein WhiA (Listeria monocytogenes serotype 4a (strain HCC23)).